The sequence spans 251 residues: SNAP25 homologous protein SNAP29 (251 aa).

Residues 1-52 are disordered; sequence MAPKNSSWNPFDDEKEAAKSFSLNPFDDDDDDKEVEKRFTSSLKPSGGKENQ. Polar residues predominate over residues 40-52; that stretch reads TSSLKPSGGKENQ. Residues 186–248 enclose the t-SNARE coiled-coil homology domain; the sequence is KTQIAKQDEA…KQSNQRARYL (63 aa).

It belongs to the SNAP-25 family.

The protein localises to the membrane. It is found in the cytoplasm. Functionally, SNAREs, soluble N-ethylmaleimide-sensitive factor-attachment protein receptors, are essential proteins for fusion of cellular membranes. SNAREs localized on opposing membranes assemble to form a trans-SNARE complex, an extended, parallel four alpha-helical bundle that drives membrane fusion. The polypeptide is SNAP25 homologous protein SNAP29 (SNAP29) (Arabidopsis thaliana (Mouse-ear cress)).